The chain runs to 304 residues: UDP-3-O-acyl-N-acetylglucosamine deacetylase (304 aa).

His-78, His-237, and Asp-241 together coordinate Zn(2+). The Proton donor role is filled by His-264.

Belongs to the LpxC family. Zn(2+) serves as cofactor.

It carries out the reaction a UDP-3-O-[(3R)-3-hydroxyacyl]-N-acetyl-alpha-D-glucosamine + H2O = a UDP-3-O-[(3R)-3-hydroxyacyl]-alpha-D-glucosamine + acetate. It participates in glycolipid biosynthesis; lipid IV(A) biosynthesis; lipid IV(A) from (3R)-3-hydroxytetradecanoyl-[acyl-carrier-protein] and UDP-N-acetyl-alpha-D-glucosamine: step 2/6. In terms of biological role, catalyzes the hydrolysis of UDP-3-O-myristoyl-N-acetylglucosamine to form UDP-3-O-myristoylglucosamine and acetate, the committed step in lipid A biosynthesis. This is UDP-3-O-acyl-N-acetylglucosamine deacetylase from Nitrosococcus oceani (strain ATCC 19707 / BCRC 17464 / JCM 30415 / NCIMB 11848 / C-107).